Consider the following 416-residue polypeptide: MSQPSTANGGFPSVVVTAVTATTSISPDIESTWKGLLAGESGIHALEDEFVTKWDLAVKIGGHLKDPVDSHMGRLDMRRMSYVQRMGKLLGGQLWESAGSPEVDPDRFAVVVGTGLGGAERIVESYDLMNAGGPRKVSPLAVQMIMPNGAAAVIGLQLGARAGVMTPVSACSSGSEAIAHAWRQIVMGDADVAVCGGVEGPIEALPIAAFSMMRAMSTRNDEPERASRPFDKDRDGFVFGEAGALMLIETEEHAKARGAKPLARLLGAGITSDAFHMVAPAADGVRAGRAMTRSLELAGLSPADIDHVNAHGTATPIGDAAEANAIRVAGCDQAAVYAPKSALGHSIGAVGALESVLTVLTLRDGVIPPTLNYETPDPEIDLDVVAGEPRYGDYRYAVNNSFGFGGHNVALAFGRY.

The Ketosynthase family 3 (KS3) domain maps to 11-415 (FPSVVVTAVT…GHNVALAFGR (405 aa)). Catalysis depends on for beta-ketoacyl synthase activity residues Cys171, His311, and His345. Positions 311 and 345 each coordinate substrate.

Belongs to the thiolase-like superfamily. Beta-ketoacyl-ACP synthases family.

It is found in the cytoplasm. The enzyme catalyses an ultra-long-chain mono-unsaturated fatty acyl-[ACP] + malonyl-[ACP] + H(+) = a 3-oxo-ultra-long-chain mono-unsaturated fatty acyl-[ACP] + holo-[ACP] + CO2. It functions in the pathway lipid metabolism; mycolic acid biosynthesis. Functionally, part of the mycobacterial fatty acid elongation system FAS-II, which is involved in mycolic acid biosynthesis. Catalyzes the elongation of long chain acyl-ACP substrates by the addition of two carbons from malonyl-ACP to an acyl acceptor. Involved in the initial extension of the mycolate chain and forms monounsaturated fatty acids that averaged 40 carbons in length. The protein is 3-oxoacyl-[acyl-carrier-protein] synthase 1 (kasA) of Mycobacterium tuberculosis (strain ATCC 35801 / TMC 107 / Erdman).